Consider the following 496-residue polypeptide: Probable CtpA-like serine protease (496 aa).

Over residues 1–16 the composition is skewed to basic and acidic residues; the sequence is MDDKQHTSSSDDERAE. A disordered region spans residues 1–27; the sequence is MDDKQHTSSSDDERAEIATSNQDQQTN. Over residues 18–27 the composition is skewed to polar residues; the sequence is ATSNQDQQTN. Residues 39–59 form a helical membrane-spanning segment; it reads FISILIGTILITAVITVVAYI. The PDZ domain occupies 124 to 206; it reads TKSFNEGVSG…TEVTLTVQRG (83 aa). Active-site charge relay system residues include Ser-329, Asp-340, and Lys-354.

It belongs to the peptidase S41A family.

It localises to the cell membrane. The protein is Probable CtpA-like serine protease of Staphylococcus aureus (strain bovine RF122 / ET3-1).